The sequence spans 139 residues: Immunogenic miracidial antigen 8I (139 aa).

The segment at 61-139 is disordered; sequence IDVGDEDYHD…PKKYGSGYKH (79 aa). Residues 64 to 85 show a composition bias toward acidic residues; the sequence is GDEDYHDGDDDVDYTDDVDDVD. Over residues 90 to 103 the composition is skewed to polar residues; the sequence is SPSQLLQGGYQRNQ.

Belongs to the immunogenic miracidial antigen family.

This Schistosoma japonicum (Blood fluke) protein is Immunogenic miracidial antigen 8I (8I).